Here is a 58-residue protein sequence, read N- to C-terminus: Photosystem II reaction center X protein (58 aa).

Residues I27 to W47 traverse the membrane as a helical segment.

The protein belongs to the PsbX family. Type 2 subfamily. In terms of assembly, PSII consists of a core antenna complex that captures photons, and an electron transfer chain that converts photonic excitation into a charge separation. PSII forms dimeric complexes.

It localises to the cellular thylakoid membrane. Functionally, involved in the binding and/or turnover of quinones at the Q(B) site of Photosystem II. The chain is Photosystem II reaction center X protein from Prochlorococcus marinus (strain MIT 9211).